Consider the following 312-residue polypeptide: Lipoyl synthase (312 aa).

[4Fe-4S] cluster-binding residues include C51, C56, C62, C77, C81, C84, and S290. A Radical SAM core domain is found at 63–280 (WSRKTATYLA…RTIGTSLGLF (218 aa)).

This sequence belongs to the radical SAM superfamily. Lipoyl synthase family. Requires [4Fe-4S] cluster as cofactor.

The protein localises to the cytoplasm. The catalysed reaction is [[Fe-S] cluster scaffold protein carrying a second [4Fe-4S](2+) cluster] + N(6)-octanoyl-L-lysyl-[protein] + 2 oxidized [2Fe-2S]-[ferredoxin] + 2 S-adenosyl-L-methionine + 4 H(+) = [[Fe-S] cluster scaffold protein] + N(6)-[(R)-dihydrolipoyl]-L-lysyl-[protein] + 4 Fe(3+) + 2 hydrogen sulfide + 2 5'-deoxyadenosine + 2 L-methionine + 2 reduced [2Fe-2S]-[ferredoxin]. It participates in protein modification; protein lipoylation via endogenous pathway; protein N(6)-(lipoyl)lysine from octanoyl-[acyl-carrier-protein]: step 2/2. Its function is as follows. Catalyzes the radical-mediated insertion of two sulfur atoms into the C-6 and C-8 positions of the octanoyl moiety bound to the lipoyl domains of lipoate-dependent enzymes, thereby converting the octanoylated domains into lipoylated derivatives. The polypeptide is Lipoyl synthase (Chlamydia caviae (strain ATCC VR-813 / DSM 19441 / 03DC25 / GPIC) (Chlamydophila caviae)).